The primary structure comprises 226 residues: Leucyl/phenylalanyl-tRNA--protein transferase (226 aa).

Belongs to the L/F-transferase family.

It localises to the cytoplasm. It catalyses the reaction N-terminal L-lysyl-[protein] + L-leucyl-tRNA(Leu) = N-terminal L-leucyl-L-lysyl-[protein] + tRNA(Leu) + H(+). It carries out the reaction N-terminal L-arginyl-[protein] + L-leucyl-tRNA(Leu) = N-terminal L-leucyl-L-arginyl-[protein] + tRNA(Leu) + H(+). The enzyme catalyses L-phenylalanyl-tRNA(Phe) + an N-terminal L-alpha-aminoacyl-[protein] = an N-terminal L-phenylalanyl-L-alpha-aminoacyl-[protein] + tRNA(Phe). Its function is as follows. Functions in the N-end rule pathway of protein degradation where it conjugates Leu, Phe and, less efficiently, Met from aminoacyl-tRNAs to the N-termini of proteins containing an N-terminal arginine or lysine. The sequence is that of Leucyl/phenylalanyl-tRNA--protein transferase from Pseudomonas fluorescens (strain ATCC BAA-477 / NRRL B-23932 / Pf-5).